The chain runs to 232 residues: PsbP domain-containing protein 2, chloroplastic (232 aa).

The N-terminal 34 residues, 1-34 (MWSQSFLGSAPKLCLFSSSLPPFSHHKIHKFFCF), are a transit peptide targeting the chloroplast. Residues 35–71 (AQNPSSTVSINLSKRHLNLSILTLFFNGFLLDNKAKS) constitute a thylakoid transit peptide.

The protein belongs to the PsbP family.

The protein resides in the plastid. It is found in the chloroplast thylakoid lumen. The sequence is that of PsbP domain-containing protein 2, chloroplastic (PPD2) from Arabidopsis thaliana (Mouse-ear cress).